The primary structure comprises 882 residues: Translation initiation factor IF-2 (882 aa).

The interval 50 to 299 is disordered; that stretch reads SFKSANTTKP…KERPLPETLV (250 aa). Basic and acidic residues-rich tracts occupy residues 60–71 and 84–96; these read STEKDSKNSSRK and RRRD…DNRH. The segment covering 97 to 108 has biased composition (basic residues); sequence GNNKRRNNKFKK. Basic and acidic residues-rich tracts occupy residues 109-133, 169-183, 232-242, and 250-263; these read QQND…DLLN, KKVE…EKLE, QKEETKPTRKK, and EVPD…EHSD. Positions 264 to 277 are enriched in basic residues; the sequence is KARRRRNKKNKRIN. Over residues 278–294 the composition is skewed to basic and acidic residues; sequence QSKEIKKQPTQRKERPL. Positions 383–552 constitute a tr-type G domain; it reads KRPPVVTIMG…LLQADVMELK (170 aa). Residues 392-399 form a G1 region; that stretch reads GHVDHGKT. Residue 392 to 399 coordinates GTP; it reads GHVDHGKT. Residues 417-421 are G2; that stretch reads GITQK. The interval 438–441 is G3; the sequence is DTPG. Residues 438-442 and 492-495 contribute to the GTP site; these read DTPGH and NKID. Positions 492–495 are G4; the sequence is NKID. The G5 stretch occupies residues 528 to 530; it reads SAK.

It belongs to the TRAFAC class translation factor GTPase superfamily. Classic translation factor GTPase family. IF-2 subfamily.

It localises to the cytoplasm. One of the essential components for the initiation of protein synthesis. Protects formylmethionyl-tRNA from spontaneous hydrolysis and promotes its binding to the 30S ribosomal subunits. Also involved in the hydrolysis of GTP during the formation of the 70S ribosomal complex. This chain is Translation initiation factor IF-2, found in Lactobacillus gasseri (strain ATCC 33323 / DSM 20243 / BCRC 14619 / CIP 102991 / JCM 1131 / KCTC 3163 / NCIMB 11718 / NCTC 13722 / AM63).